A 316-amino-acid polypeptide reads, in one-letter code: MTMTAHTRETTSMSDAQDKAGTLIEALPWIQRFAGTTMVIKYGGNAMVNDDLRRAFAEDIVFLHHVGIHPVVVHGGGPQINSMLSRLGIESEFKGGLRVTTPEAMDVVRMVLTGQVGRELVGLINSHGPYAVGMSGEDGGLLRAVRTGTVVDGEEVDLGLVGEVVGVDPAGIKDILDAGRIPVISTVAPEILDDGNGSGPTTGQVLNVNADTAAAAVASALGATKLVILTDVEGLYANWPDKSSLISSLTASELRDMLPRLESGMIPKMAACLKAIDEGVERAHIVDGRLPHSMLLETFTTAGIGTQVVPDEEVNA.

Residues 76–77 (GG), R98, and N207 each bind substrate.

This sequence belongs to the acetylglutamate kinase family. ArgB subfamily.

It is found in the cytoplasm. The catalysed reaction is N-acetyl-L-glutamate + ATP = N-acetyl-L-glutamyl 5-phosphate + ADP. The protein operates within amino-acid biosynthesis; L-arginine biosynthesis; N(2)-acetyl-L-ornithine from L-glutamate: step 2/4. Catalyzes the ATP-dependent phosphorylation of N-acetyl-L-glutamate. This is Acetylglutamate kinase from Paenarthrobacter aurescens (strain TC1).